Here is a 504-residue protein sequence, read N- to C-terminus: Occludin (504 aa).

Topologically, residues 1-57 (MFSKKSYDGPPAGYGPPTGYGAPTADYGYGSPPPGSYYVDDAPQLFYKWTSPPGAVR) are cytoplasmic. In terms of domain architecture, MARVEL spans 51–253 (SPPGAVRGLQ…ICFFAQKTRS (203 aa)). Residues 58–80 (GLQAGVLVLCIAIFACVASTLAW) traverse the membrane as a helical segment. Residues 81–123 (DYGYGLGGAYGTGLGGFYGSNYYGSGLSYSYGYGGYYGGVNQR) lie on the Extracellular side of the membrane. The chain crosses the membrane as a helical span at residues 124 to 148 (TANGFMIAMAVLCFLAQLGLLVAAL). Over 149–158 (SKSGATRSRR) the chain is Cytoplasmic. Residues 159-183 (FYLAVLVLSAVLAFVMLIASIVYIM) traverse the membrane as a helical segment. Residues 184–227 (GVNPQAQMSSGYYYSPLLAMCSQAYGSTYLNQYIYHYCTVDPQE) lie on the Extracellular side of the membrane. Residues Cys204 and Cys221 are joined by a disulfide bond. Residues 228–249 (AVAAVCGFLIVILLCLICFFAQ) form a helical membrane-spanning segment. Residues 250–504 (KTRSKIWRYG…MVSAYDKVRG (255 aa)) lie on the Cytoplasmic side of the membrane. Residues 324-396 (PSGTYSSRGD…VESSDERDQE (73 aa)) are disordered. Basic residues predominate over residues 361–370 (PARRGRRRRR). Phosphotyrosine occurs at positions 379 and 383. Positions 379 to 385 (YETDYTT) are interaction with TJP1. Positions 396–504 (EQWASLYPPI…MVSAYDKVRG (109 aa)) constitute an OCEL domain. A coiled-coil region spans residues 412-471 (QRYKQEFDTDLKRYKQLCAEMDSINDRLNQLSRRLDSITEDSPQYQDVAEEYNQLKDLKR).

The protein belongs to the ELL/occludin family. In terms of assembly, interacts with TJP1 and TJP3. Phosphorylated. Localized at tight junctions of both epithelial and endothelial cells. Highly expressed in lung and liver. Expressed at a lower level in brain.

The protein resides in the cell membrane. Its subcellular location is the cell junction. It is found in the tight junction. In terms of biological role, may play a role in the formation and regulation of the tight junction (TJ) paracellular permeability barrier. Interacts with ZO-1. This chain is Occludin (OCLN), found in Gallus gallus (Chicken).